The following is a 443-amino-acid chain: Xaa-Pro dipeptidase (443 aa).

Mn(2+) contacts are provided by aspartate 246, aspartate 257, histidine 339, glutamate 384, and glutamate 423.

This sequence belongs to the peptidase M24B family. Bacterial-type prolidase subfamily. Mn(2+) serves as cofactor.

It catalyses the reaction Xaa-L-Pro dipeptide + H2O = an L-alpha-amino acid + L-proline. In terms of biological role, splits dipeptides with a prolyl residue in the C-terminal position. The polypeptide is Xaa-Pro dipeptidase (Salmonella choleraesuis (strain SC-B67)).